Here is a 512-residue protein sequence, read N- to C-terminus: Glycerol-3-phosphate dehydrogenase (512 aa).

Asp16–Glu44 contributes to the FAD binding site.

Belongs to the FAD-dependent glycerol-3-phosphate dehydrogenase family. The cofactor is FAD.

The protein resides in the cytoplasm. The enzyme catalyses a quinone + sn-glycerol 3-phosphate = dihydroxyacetone phosphate + a quinol. The sequence is that of Glycerol-3-phosphate dehydrogenase (glpD) from Pseudomonas aeruginosa (strain ATCC 15692 / DSM 22644 / CIP 104116 / JCM 14847 / LMG 12228 / 1C / PRS 101 / PAO1).